Here is a 152-residue protein sequence, read N- to C-terminus: Xanthine-guanine phosphoribosyltransferase (152 aa).

Residues 37-38 (RG), arginine 69, and 88-96 (DDLVDTGGT) each bind 5-phospho-alpha-D-ribose 1-diphosphate. Arginine 69 contributes to the GMP binding site. Residue aspartate 89 participates in Mg(2+) binding. Residues aspartate 92 and isoleucine 135 each contribute to the guanine site. Aspartate 92 and isoleucine 135 together coordinate xanthine. Residues 92–96 (DTGGT) and 134–135 (WI) contribute to the GMP site.

It belongs to the purine/pyrimidine phosphoribosyltransferase family. XGPT subfamily. Homotetramer. The cofactor is Mg(2+).

The protein resides in the cell inner membrane. The enzyme catalyses GMP + diphosphate = guanine + 5-phospho-alpha-D-ribose 1-diphosphate. It carries out the reaction XMP + diphosphate = xanthine + 5-phospho-alpha-D-ribose 1-diphosphate. It catalyses the reaction IMP + diphosphate = hypoxanthine + 5-phospho-alpha-D-ribose 1-diphosphate. It functions in the pathway purine metabolism; GMP biosynthesis via salvage pathway; GMP from guanine: step 1/1. Its pathway is purine metabolism; XMP biosynthesis via salvage pathway; XMP from xanthine: step 1/1. Its function is as follows. Purine salvage pathway enzyme that catalyzes the transfer of the ribosyl-5-phosphate group from 5-phospho-alpha-D-ribose 1-diphosphate (PRPP) to the N9 position of the 6-oxopurines guanine and xanthine to form the corresponding ribonucleotides GMP (guanosine 5'-monophosphate) and XMP (xanthosine 5'-monophosphate), with the release of PPi. To a lesser extent, also acts on hypoxanthine. The polypeptide is Xanthine-guanine phosphoribosyltransferase (Erwinia tasmaniensis (strain DSM 17950 / CFBP 7177 / CIP 109463 / NCPPB 4357 / Et1/99)).